The chain runs to 147 residues: Methylmalonyl-CoA mutase homolog (147 aa).

This sequence to methylmalonyl-CoA mutase.

The polypeptide is Methylmalonyl-CoA mutase homolog (Alkalihalophilus pseudofirmus (strain ATCC BAA-2126 / JCM 17055 / OF4) (Bacillus pseudofirmus)).